An 85-amino-acid polypeptide reads, in one-letter code: Putative membrane protein insertion efficiency factor (85 aa).

The tract at residues 66 to 85 (PLNSGGDDPVPPKLDDNREH) is disordered.

The protein belongs to the UPF0161 family.

The protein resides in the cell inner membrane. Could be involved in insertion of integral membrane proteins into the membrane. This Yersinia pestis bv. Antiqua (strain Antiqua) protein is Putative membrane protein insertion efficiency factor.